A 189-amino-acid polypeptide reads, in one-letter code: uncharacterized protein (189 aa).

The first 20 residues, 1 to 20 (MKFSTVGFLFSTILFKSAFA), serve as a signal peptide directing secretion. Residues 74 to 109 (KKNEVLVDVLKKCDPSGNRRITLDEFLAFRKNGGEL) enclose the EF-hand domain. 5 residues coordinate Ca(2+): D87, S89, N91, R93, and E98.

It is found in the endoplasmic reticulum lumen. The protein localises to the golgi apparatus lumen. This is an uncharacterized protein from Schizosaccharomyces pombe (strain 972 / ATCC 24843) (Fission yeast).